The sequence spans 713 residues: Probable glutamate carboxypeptidase VP8 (713 aa).

Over methionine 1–proline 10 the chain is Cytoplasmic. Residues proline 11–leucine 31 form a helical; Signal-anchor for type II membrane protein membrane-spanning segment. Residues histidine 32 to proline 713 lie on the Extracellular side of the membrane. Residues asparagine 66 and asparagine 311 are each glycosylated (N-linked (GlcNAc...) asparagine). Residues alanine 245 to leucine 539 form a catalytic region. Zn(2+)-binding residues include histidine 345 and aspartate 355. The Nucleophile role is filled by glutamate 392. Zn(2+) contacts are provided by glutamate 393, aspartate 421, and histidine 505. 2 N-linked (GlcNAc...) asparagine glycosylation sites follow: asparagine 667 and asparagine 706.

Belongs to the peptidase M28 family. M28B subfamily. Requires Zn(2+) as cofactor.

The protein resides in the cell membrane. It catalyses the reaction Release of an unsubstituted, C-terminal glutamyl residue, typically from Ac-Asp-Glu or folylpoly-gamma-glutamates.. Involved in the regulation of meristem development and seed maturation processes. Mediates regulation of embryonic regulatory genes and genes controlling abscisic acid (ABA) biosynthesis and turnover in developing seeds. May be required for the synthesis of small signaling molecules that integrates meristem and embryo formation in seeds. The polypeptide is Probable glutamate carboxypeptidase VP8 (Zea mays (Maize)).